The following is a 439-amino-acid chain: Adenylosuccinate synthetase (439 aa).

GTP is bound by residues 12–18 (GDEGKGK) and 40–42 (GHT). D13 acts as the Proton acceptor in catalysis. Residues D13 and G40 each coordinate Mg(2+). IMP contacts are provided by residues 13 to 16 (DEGK), 38 to 41 (NAGH), T137, R151, Q232, T247, and R311. H41 serves as the catalytic Proton donor. Residue 307–313 (ATTGRPR) coordinates substrate. Residues R313, 339–341 (KLD), and 421–423 (SNG) contribute to the GTP site.

This sequence belongs to the adenylosuccinate synthetase family. In terms of assembly, homodimer. Mg(2+) is required as a cofactor.

The protein localises to the cytoplasm. The enzyme catalyses IMP + L-aspartate + GTP = N(6)-(1,2-dicarboxyethyl)-AMP + GDP + phosphate + 2 H(+). It functions in the pathway purine metabolism; AMP biosynthesis via de novo pathway; AMP from IMP: step 1/2. Functionally, plays an important role in the de novo pathway of purine nucleotide biosynthesis. Catalyzes the first committed step in the biosynthesis of AMP from IMP. The polypeptide is Adenylosuccinate synthetase (Salinibacter ruber (strain DSM 13855 / M31)).